The primary structure comprises 252 residues: Protein IRON-RELATED TRANSCRIPTION FACTOR 3 (252 aa).

The segment at 36–49 (PRKVHKSEREKLKR) is basic motif. A bHLH domain is found at 36–86 (PRKVHKSEREKLKRGHLNDLFGELGNMLEADRQSNGKACILTDTTRILRDL). Positions 50–86 (GHLNDLFGELGNMLEADRQSNGKACILTDTTRILRDL) are helix-loop-helix motif. Positions 76-131 (LTDTTRILRDLLSQVKSLRQENSTLQNESNYVTMERNELQDENGALRSEISDLQNE) form a coiled coil. The tract at residues 135–252 (RATGSPGWGH…GLPRMEDEQM (118 aa)) is disordered. Positions 162 to 176 (PSQQPMQPSPMTTST) are enriched in low complexity. A compositionally biased stretch (acidic residues) spans 208–219 (PAEDPEPSEDQE).

It belongs to the bHLH protein family.

The protein resides in the nucleus. In terms of biological role, transcription factor that acts as a negative regulator of the iron deficiency response. Suppresses the induction of iron deficiency responsive genes, such as NAS1, NAS2, IRO2, IRT1, YSL15, and NRAMP1. This is Protein IRON-RELATED TRANSCRIPTION FACTOR 3 from Oryza sativa subsp. japonica (Rice).